Reading from the N-terminus, the 800-residue chain is Protein MICRORCHIDIA 4 (800 aa).

Disordered regions lie at residues 1-76 and 552-702; these read MEPI…ARSD and AKRQ…RTLS. Residues 9–18 are compositionally biased toward polar residues; the sequence is NPVTTSTLST. Residues 36 to 47 show a composition bias toward low complexity; sequence ELSSSNEGSELG. Composition is skewed to basic and acidic residues over residues 559-578 and 628-641; these read SAKD…EFDP and VSKD…EKGG. Over residues 666-675 the composition is skewed to acidic residues; the sequence is NSDDDYDCDS. A coiled-coil region spans residues 699 to 766; sequence RTLSQLEQEN…QASLIDVFAE (68 aa). 2 short sequence motifs (nuclear localization signal) span residues 716–723 and 735–742; these read DKKEEVFL and LRKTLEAE.

Belongs to the MORC ATPase protein family. As to quaternary structure, homodimer and heterodimer. Component of an RNA-directed DNA methylation (RdDM) complex. Forms homomeric complexes. Requires Mg(2+) as cofactor. Mn(2+) serves as cofactor.

The protein resides in the nucleus. Exhibits ATPase activity. Binds DNA/RNA in a non-specific manner and exhibits endonuclease activity. Probably involved in DNA repair. Involved in RNA-directed DNA methylation (RdDM) as a component of the RdDM machinery and required for gene silencing. May also be involved in the regulation of chromatin architecture to maintain gene silencing. Together with MORC7, acts to suppress a wide set of non-methylated protein-coding genes, especially involved in pathogen response. Positive regulator of defense against the oomycete Hyaloperonospora arabidopsidis (Hpa). In Arabidopsis thaliana (Mouse-ear cress), this protein is Protein MICRORCHIDIA 4.